Here is a 1273-residue protein sequence, read N- to C-terminus: MYLWLKLLAFSLALLGPEVFVTGQGTTDDGLDTTEIVLLPQTDPLPARTTEFTPPSISERGNGSSETTYLPGFSSTLMPHLTPQPDSQTPSARGADTQTLSSQADLTTLTAAPSGETDPPGVPEESTVPETFPGGTPILARNSTAPSPTHTSNVSTTDISSGANLTTPAPSTLGFASNTTTSTEIATPQTKPSCDEKFGNVTVRYIYDDSSKNFNANLEGDKKPKCEYTDCEKELKNLPECSQKNVTLSNGSCTPDKIINLDVPPGTHNFNLTNCTPDIEANTSICLEWKIKNKFTCDIQKISYNFRCTPEMKTFALDKHGTLWLHNLTVRTNYTCAAEVLYNNVILLKQDRRVQTDFGTPEMLPHVQCKNSTNSTTLVSWAEPASKHHGYILCYKKTPSEKCENLANDVNSFEVKNLRPYTEYTVSLFAYVIGRVQRNGPAKDCNFRTKAARPGKVNGMKTSRASDNSINVTCNSPYEINGPEARYILEVKSGGSLVKTFNQSTCKFVVDNLYYSTDYEFLVYFYNGEYLGDPEIKPQSTSYNSKALIIFLVFLIIVTSIALLVVLYKIYDLRKKRSSNLDEQQELVERDEEKQLINVDPIHSDLLLETYKRKIADEGRLFLAEFQSIPRVFSKFPIKDARKSQNQNKNRYVDILPYDYNRVELSEINGDAGSTYINASYIDGFKEPRKYIAAQGPRDETVDDFWKMIWEQKATVIVMVTRCEEGNRNKCAEYWPCMEEGTRTFRDVVVTINDHKRCPDYIIQKLSIAHKKEKATGREVTHIQFTSWPDHGVPEDPHLLLKLRRRVNAFSNFFSGPIVVHCSAGVGRTGTYIGIDAMLESLEAEGKVDVYGYVVNLRRQRCLMVQVEAQYILIHQALVEYNQFGETEVNLSELHSCLQNLKKRDPPSDPSPLEAEYQRLPSYRSWRTQHIGNQEENKKKNRSSNVVPYDFNRVPLKHELEMSKESEAESDESSDEDSDSEETSKYINASFVMSYWKPEMMIAAQGPLKETIGDFWQMIFQRKVKVIVMLTELMSGDQEVCAQYWGEGKQTYGDMEVMLKDTNKSSAYILRAFELRHSKRKEPRTVYQYQCTTWKGEELPAEPKDLVTLIQNIKQKLPKSGSEGMKYHKHASILVHCRDGSQQTGLFCALFNLLESAETEDVVDVFQVVKSLRKARPGMVGSFEQYQFLYDIMASIYPTQNGQVKKANSQDKIEFHNEVDGAKQDANCVQPADPLNKAQEDSKEVGASEPASGSEEPEHSANGPMSPALTPSS.

A signal peptide spans 1-23; that stretch reads MYLWLKLLAFSLALLGPEVFVTG. Over 24 to 546 the chain is Extracellular; sequence QGTTDDGLDT…KPQSTSYNSK (523 aa). Positions 45–192 are disordered; the sequence is LPARTTEFTP…TEIATPQTKP (148 aa). 3 stretches are compositionally biased toward polar residues: residues 50–77, 84–111, and 141–192; these read TEFT…SSTL, QPDS…TLTA, and RNST…QTKP. Asparagine 62 carries N-linked (GlcNAc...) asparagine glycosylation. N-linked (GlcNAc...) asparagine glycans are attached at residues asparagine 142, asparagine 153, asparagine 164, asparagine 178, asparagine 200, asparagine 245, asparagine 250, asparagine 271, asparagine 282, asparagine 327, asparagine 333, asparagine 371, asparagine 374, asparagine 471, and asparagine 502. 2 Fibronectin type-III domains span residues 361-452 and 453-545; these read PEML…TKAA and RPGK…SYNS. The helical transmembrane segment at 547 to 567 threads the bilayer; sequence ALIIFLVFLIIVTSIALLVVL. Residues 568–1273 lie on the Cytoplasmic side of the membrane; the sequence is YKIYDLRKKR…PMSPALTPSS (706 aa). Tyrosine-protein phosphatase domains lie at 622-881 and 913-1196; these read FLAE…LVEY and LEAE…MASI. A Phosphotyrosine modification is found at tyrosine 652. Substrate is bound by residues aspartate 790, 822 to 828, and glutamine 866; that span reads CSAGVGR. Cysteine 822 (phosphocysteine intermediate) is an active-site residue. Phosphoserine occurs at positions 944, 963, 966, 970, 973, 974, and 978. The tract at residues 960-984 is disordered; that stretch reads LEMSKESEAESDESSDEDSDSEETS. Acidic residues predominate over residues 968–981; it reads AESDESSDEDSDSE. Cysteine 1137 acts as the Phosphocysteine intermediate in catalysis. Phosphoserine occurs at positions 1209 and 1266. The tract at residues 1219–1273 is disordered; that stretch reads VDGAKQDANCVQPADPLNKAQEDSKEVGASEPASGSEEPEHSANGPMSPALTPSS.

The protein belongs to the protein-tyrosine phosphatase family. Receptor class 1/6 subfamily. As to quaternary structure, interacts with SKAP1. Interacts with DPP4; the interaction is enhanced in an interleukin-12-dependent manner in activated lymphocytes. Binds GANAB and PRKCSH. Interacts with CD53; this interaction stabilizes PTPRC on the membrane and is required for optimal phosphatase activity. Interacts with CLEC10A. In terms of processing, heavily N- and O-glycosylated. Post-translationally, the cytoplasmic domain contains potential phosphorylation sites. Isoform 1 and isoform 2 are found in thymocyte and lymph node. Isoform 4 and isoform 3 are found in the lymph nod.

Its subcellular location is the cell membrane. It localises to the membrane raft. It is found in the synapse. The catalysed reaction is O-phospho-L-tyrosyl-[protein] + H2O = L-tyrosyl-[protein] + phosphate. In terms of biological role, protein tyrosine-protein phosphatase required for T-cell activation through the antigen receptor. Acts as a positive regulator of T-cell coactivation upon binding to DPP4. The first PTPase domain has enzymatic activity, while the second one seems to affect the substrate specificity of the first one. Upon T-cell activation, recruits and dephosphorylates SKAP1 and FYN. Dephosphorylates LYN, and thereby modulates LYN activity. Interacts with CLEC10A at antigen presenting cell-T cell contact; CLEC10A on immature dendritic cells recognizes Tn antigen-carrying PTPRC/CD45 receptor on effector T cells and modulates T cell activation threshold to limit autoreactivity. In Rattus norvegicus (Rat), this protein is Receptor-type tyrosine-protein phosphatase C (Ptprc).